The following is a 310-amino-acid chain: MIIVTGGAGFIGSNIVKALNDKGITDILVVDNLKDGTKFVNLVDLNIADYMDKEDFLIQIMAGEEFGEIEAIFHEGACSSTTEWDGKYMMDNNYQYSKELLHYCLEREIPFLYASSAATYGGRTSDFIESREYEQPLNVYGYSKFLFDEYVRQILPEANSQIVGFRYFNVYGPREGHKGSMASVAFHLNTQLNNGESPKLFEGSDGFKRDFVYVGDVADVNLWFWENGVSGIFNLGTGRAESFQAVADATLAYHKKGSIEYIPFPDKLKGRYQAFTQADLTNLRKAGYDKPFKTVAEGVTEYMAWLNRDA.

Residues 10–11, 31–32, Lys38, Lys53, 75–79, and Asn92 each bind NADP(+); these read FI, DN, and EGACS. Residue Tyr140 is the Proton acceptor of the active site. Lys144 lines the NADP(+) pocket. Substrate is bound at residue Asn169. The NADP(+) site is built by Val170 and Lys178. Residue Lys178 is the Proton acceptor of the active site. Substrate contacts are provided by residues Ser180, His187, 201–204, Arg209, and Tyr272; that span reads FEGS.

The protein belongs to the NAD(P)-dependent epimerase/dehydratase family. HldD subfamily. In terms of assembly, homopentamer. The cofactor is NADP(+).

It catalyses the reaction ADP-D-glycero-beta-D-manno-heptose = ADP-L-glycero-beta-D-manno-heptose. It participates in nucleotide-sugar biosynthesis; ADP-L-glycero-beta-D-manno-heptose biosynthesis; ADP-L-glycero-beta-D-manno-heptose from D-glycero-beta-D-manno-heptose 7-phosphate: step 4/4. Its function is as follows. Catalyzes the interconversion between ADP-D-glycero-beta-D-manno-heptose and ADP-L-glycero-beta-D-manno-heptose via an epimerization at carbon 6 of the heptose. The chain is ADP-L-glycero-D-manno-heptose-6-epimerase from Klebsiella pneumoniae subsp. pneumoniae (strain ATCC 700721 / MGH 78578).